A 152-amino-acid polypeptide reads, in one-letter code: Probable methionine-R-sulfoxide reductase B (152 aa).

Positions 27–151 constitute a MsrB domain; it reads QTEWKSVLPN…NSVCMAFEKK (125 aa). Residues C66, C69, C116, and C119 each coordinate Zn(2+). C140 functions as the Nucleophile in the catalytic mechanism.

The protein belongs to the MsrB Met sulfoxide reductase family. It depends on Zn(2+) as a cofactor.

It catalyses the reaction L-methionyl-[protein] + [thioredoxin]-disulfide + H2O = L-methionyl-(R)-S-oxide-[protein] + [thioredoxin]-dithiol. Methionine-sulfoxide reductase that specifically reduces methionine (R)-sulfoxide back to methionine. While in many cases, methionine oxidation is the result of random oxidation following oxidative stress, methionine oxidation is also a post-translational modification that takes place on specific residue. The protein is Probable methionine-R-sulfoxide reductase B of Caenorhabditis elegans.